Here is a 485-residue protein sequence, read N- to C-terminus: ATP synthase subunit beta (485 aa).

The span at 1 to 11 (MPATETADKNT) shows a compositional bias: basic and acidic residues. The interval 1-20 (MPATETADKNTKSANSDTSG) is disordered. 170–177 (GGAGVGKT) provides a ligand contact to ATP.

This sequence belongs to the ATPase alpha/beta chains family. In terms of assembly, F-type ATPases have 2 components, CF(1) - the catalytic core - and CF(0) - the membrane proton channel. CF(1) has five subunits: alpha(3), beta(3), gamma(1), delta(1), epsilon(1). CF(0) has three main subunits: a(1), b(2) and c(9-12). The alpha and beta chains form an alternating ring which encloses part of the gamma chain. CF(1) is attached to CF(0) by a central stalk formed by the gamma and epsilon chains, while a peripheral stalk is formed by the delta and b chains.

It is found in the cell membrane. It carries out the reaction ATP + H2O + 4 H(+)(in) = ADP + phosphate + 5 H(+)(out). Functionally, produces ATP from ADP in the presence of a proton gradient across the membrane. The catalytic sites are hosted primarily by the beta subunits. This is ATP synthase subunit beta from Mycolicibacterium paratuberculosis (strain ATCC BAA-968 / K-10) (Mycobacterium paratuberculosis).